The following is a 107-amino-acid chain: UPF0145 protein PC1_1703 (107 aa).

Belongs to the UPF0145 family.

The chain is UPF0145 protein PC1_1703 from Pectobacterium carotovorum subsp. carotovorum (strain PC1).